Consider the following 295-residue polypeptide: Protein FAM221A (295 aa).

A compositionally biased stretch (basic and acidic residues) spans 272-283 (QERLLKEKEQKR). Residues 272–295 (QERLLKEKEQKRQKNSKPPTTNRP) are disordered.

It belongs to the FAM221 family.

The polypeptide is Protein FAM221A (fam221a) (Xenopus tropicalis (Western clawed frog)).